The chain runs to 328 residues: Naphthalene 1,2-dioxygenase/salicylate 5-hydroxylase systems, ferredoxin--NAD(P)(+), reductase component (328 aa).

The 89-residue stretch at 1-89 (MELVVEPLNL…DCTIEIPESD (89 aa)) folds into the 2Fe-2S ferredoxin-type domain. The [2Fe-2S] cluster site is built by Cys-35, Cys-40, Cys-43, and Cys-73. The FAD-binding FR-type domain maps to 96–193 (ARIVKGTVTA…SGPLGTAYLR (98 aa)).

This sequence belongs to the bacterial ring-hydroxylating dioxygenase ferredoxin reductase family. In terms of assembly, ferredoxin reductase NagAa belongs to both the salicylate 5-hydroxylase (S5H) and the naphthalene 1,2-dioxygenase (NDO) multicomponent enzyme systems. The NDO multicomponent enzyme system is composed of an electron transfer component and a dioxygenase component (iron sulfur protein (ISP)). The electron transfer component is composed of a ferredoxin reductase (NagAa) and a ferredoxin (NagAb), and the dioxygenase component is formed by a large alpha subunit (NagAc) and a small beta subunit (NagAd). The S5H multicomponent enzyme system is composed of an electron transfer component and a monooxygenase component. The electron transfer component is comprised of a ferredoxin reductase (NagAa) and a ferredoxin (NagAb), and the monooxygenase component is formed by a large subunit (NagG) and a small subunit (NagH). It depends on [2Fe-2S] cluster as a cofactor. Requires FAD as cofactor.

The catalysed reaction is 2 reduced [2Fe-2S]-[ferredoxin] + NAD(+) + H(+) = 2 oxidized [2Fe-2S]-[ferredoxin] + NADH. It catalyses the reaction 2 reduced [2Fe-2S]-[ferredoxin] + NADP(+) + H(+) = 2 oxidized [2Fe-2S]-[ferredoxin] + NADPH. The protein operates within aromatic compound metabolism; naphthalene degradation. Functionally, component of two multicomponent enzyme systems which are involved in the catabolism of naphthalene. Plays a role as an electron transfer component for both salicylate 5-hydroxylase (S5H) and naphthalene 1,2-dioxygenase (NDO) systems, by transferring electrons from NAD(P)H to the oxygenase component via the ferredoxin NagAb. The electron transport chain from the two systems can use both NADH and NADPH as electron donors at approximately similar rates. In Ralstonia sp, this protein is Naphthalene 1,2-dioxygenase/salicylate 5-hydroxylase systems, ferredoxin--NAD(P)(+), reductase component.